A 352-amino-acid polypeptide reads, in one-letter code: C-C chemokine receptor type 5 (352 aa).

Topologically, residues 1-30 (MDYQVSSPTYDIDYYTSEPCQKINVKQIAG) are extracellular. Sulfotyrosine is present on Tyr3. O-linked (GalNAc...) serine glycosylation is found at Ser6 and Ser7. Tyr10, Tyr14, and Tyr15 each carry sulfotyrosine. Disulfide bonds link Cys20–Cys269 and Cys101–Cys178. Residues 31–58 (RLLPPLYSLVFIFGFVGNILVVLILINC) form a helical membrane-spanning segment. Residues 59–68 (KRLKSMTDIY) lie on the Cytoplasmic side of the membrane. A helical membrane pass occupies residues 69–89 (LLNLAISDLLFLLTVPFWAHY). The Extracellular segment spans residues 90 to 102 (AAAQWDFGNTMCQ). A helical transmembrane segment spans residues 103–124 (LLTGLYFIGFFSGIFFIILLTI). The Cytoplasmic portion of the chain corresponds to 125–141 (DRYLAIVHAVFALKART). A helical transmembrane segment spans residues 142-166 (VTFGVVTSVITWVVAVFASLPGIIF). Over 167–198 (TRSQREGLHYTCSSHFPYSQYQFWKNFQTLKI) the chain is Extracellular. The chain crosses the membrane as a helical span at residues 199-218 (VILGLVLPLLVMVICYSGIL). The Cytoplasmic segment spans residues 219 to 235 (KTLLRCRNEKKRHRAVR). The chain crosses the membrane as a helical span at residues 236 to 260 (LIFTIMIVYFLFWAPYNIVLLLNTF). Topologically, residues 261-277 (QEFFGLNNCSSSNRLDQ) are extracellular. A helical membrane pass occupies residues 278–301 (AMQVTETLGMTHCCINPIIYAFVG). Residues 302-352 (EKFRNYLLVFFQKHIAKRFCKCCSIFQQEAPERASSVYTRSTGEQEISVGL) are Cytoplasmic-facing. S-palmitoyl cysteine attachment occurs at residues Cys321, Cys323, and Cys324. Phosphoserine; by BARK1 occurs at positions 336, 337, 342, and 349.

Belongs to the G-protein coupled receptor 1 family. Interacts with PRAF2. Efficient ligand binding to CCL3/MIP-1alpha and CCL4/MIP-1beta requires sulfation, O-glycosylation and sialic acid modifications. Glycosylation on Ser-6 is required for efficient binding of CCL4. Interacts with GRK2. Interacts with ARRB1 and ARRB2. Interacts with CNIH4. Interacts with S100A4; this interaction stimulates T-lymphocyte chemotaxis. Sulfated on at least 2 of the N-terminal tyrosines. Sulfation is required for efficient binding of the chemokines, CCL3 and CCL4. Post-translationally, palmitoylation in the C-terminal is important for cell surface expression. In terms of processing, phosphorylation on serine residues in the C-terminal is stimulated by binding CC chemokines especially by APO-RANTES. O-glycosylated, but not N-glycosylated. Ser-6 appears to be the major site even if Ser-7 may be also O-glycosylated. Also sialylated glycans present which contribute to chemokine binding. Thr-16 and Ser-17 may also be glycosylated and, if so, with small moieties such as a T-antigen.

It localises to the cell membrane. Functionally, receptor for a number of inflammatory CC-chemokines including CCL3/MIP-1-alpha, CCL4/MIP-1-beta and RANTES and subsequently transduces a signal by increasing the intracellular calcium ion level. May play a role in the control of granulocytic lineage proliferation or differentiation. Participates in T-lymphocyte migration to the infection site by acting as a chemotactic receptor. The protein is C-C chemokine receptor type 5 (CCR5) of Theropithecus gelada (Gelada baboon).